Consider the following 234-residue polypeptide: Adenosine 5'-phosphosulfate reductase (234 aa).

[4Fe-4S] cluster contacts are provided by Cys120, Cys121, Cys203, and Cys206. Catalysis depends on Cys229, which acts as the Nucleophile; cysteine thiosulfonate intermediate.

It belongs to the PAPS reductase family. CysH subfamily. Requires [4Fe-4S] cluster as cofactor.

It localises to the cytoplasm. The enzyme catalyses [thioredoxin]-disulfide + sulfite + AMP + 2 H(+) = adenosine 5'-phosphosulfate + [thioredoxin]-dithiol. It participates in sulfur metabolism; hydrogen sulfide biosynthesis; sulfite from sulfate. Functionally, catalyzes the formation of sulfite from adenosine 5'-phosphosulfate (APS) using thioredoxin as an electron donor. This Bacillus cereus (strain AH187) protein is Adenosine 5'-phosphosulfate reductase.